Reading from the N-terminus, the 247-residue chain is Segregation and condensation protein A (247 aa).

This sequence belongs to the ScpA family. As to quaternary structure, component of a cohesin-like complex composed of ScpA, ScpB and the Smc homodimer, in which ScpA and ScpB bind to the head domain of Smc. The presence of the three proteins is required for the association of the complex with DNA.

The protein localises to the cytoplasm. Functionally, participates in chromosomal partition during cell division. May act via the formation of a condensin-like complex containing Smc and ScpB that pull DNA away from mid-cell into both cell halves. The polypeptide is Segregation and condensation protein A (Bacillus cereus (strain ATCC 10987 / NRS 248)).